The primary structure comprises 299 residues: Anti-sigma-D factor RsdA (299 aa).

The chain crosses the membrane as a helical span at residues 86–106 (LAAVGSVAAALLVLSGFGAVV). The segment at 187–299 (NTKVETRDPN…APETPVSPTH (113 aa)) is disordered. Low complexity-rich tracts occupy residues 201-212 (PGSPSNPAAPGS) and 250-271 (PNST…EPGS).

Interacts with ECF RNA polymerase sigma factor SigD; this should inhibit the interaction of SigD with the RNA polymerase catalytic core. Post-translationally, the cytosolic fragment is degraded by a ClpP1-ClpP2-ClpX complex, as would be expected after S1P and S2P intramembrane proteolysis. This releases SigD so that it may bind to the RNA polymerase catalytic core.

The protein resides in the cell membrane. Functionally, an anti-sigma factor for extracytoplasmic function (ECF) sigma factor SigD. ECF sigma factors are held in an inactive form by an anti-sigma factor until released by regulated intramembrane proteolysis (RIP). RIP occurs when an extracytoplasmic signal triggers a concerted proteolytic cascade to transmit information and elicit cellular responses. The membrane-spanning regulatory substrate protein is first cut extracytoplasmically (site-1 protease, S1P), then within the membrane itself (site-2 protease, S2P), while cytoplasmic proteases finish degrading the regulatory protein, liberating the sigma factor. Neither S1P nor S2P proteases have been so far identified for this anti-sigma factor. This chain is Anti-sigma-D factor RsdA (rsda), found in Mycobacterium bovis (strain ATCC BAA-935 / AF2122/97).